Consider the following 233-residue polypeptide: ATP-dependent dethiobiotin synthetase BioD (233 aa).

ATP is bound at residue 12-17 (EVGKTY). Threonine 16 is a binding site for Mg(2+). Lysine 37 is a catalytic residue. ATP is bound by residues aspartate 54, 120 to 123 (EGAG), and 186 to 187 (ND). Mg(2+) contacts are provided by aspartate 54 and glutamate 120.

Belongs to the dethiobiotin synthetase family. In terms of assembly, homodimer. Mg(2+) serves as cofactor.

The protein resides in the cytoplasm. The catalysed reaction is (7R,8S)-7,8-diammoniononanoate + CO2 + ATP = (4R,5S)-dethiobiotin + ADP + phosphate + 3 H(+). Its pathway is cofactor biosynthesis; biotin biosynthesis; biotin from 7,8-diaminononanoate: step 1/2. Functionally, catalyzes a mechanistically unusual reaction, the ATP-dependent insertion of CO2 between the N7 and N8 nitrogen atoms of 7,8-diaminopelargonic acid (DAPA, also called 7,8-diammoniononanoate) to form a ureido ring. In Alteromonas mediterranea (strain DSM 17117 / CIP 110805 / LMG 28347 / Deep ecotype), this protein is ATP-dependent dethiobiotin synthetase BioD.